Consider the following 281-residue polypeptide: Digeranylgeranylglyceryl phosphate synthase (281 aa).

The next 8 helical transmembrane spans lie at 7–27 (ILRP…ALIT), 32–52 (FSVL…NVIN), 72–91 (GRIS…ALAS), 95–117 (FYLG…YYAW), 128–148 (ITIS…LGEV), 193–213 (ISGV…PSLY), 214–234 (LLGI…AVFL), and 258–278 (VGMA…TALT).

It belongs to the UbiA prenyltransferase family. DGGGP synthase subfamily. It depends on Mg(2+) as a cofactor.

It is found in the cell membrane. The enzyme catalyses sn-3-O-(geranylgeranyl)glycerol 1-phosphate + (2E,6E,10E)-geranylgeranyl diphosphate = 2,3-bis-O-(geranylgeranyl)-sn-glycerol 1-phosphate + diphosphate. Its pathway is membrane lipid metabolism; glycerophospholipid metabolism. Its function is as follows. Prenyltransferase that catalyzes the transfer of the geranylgeranyl moiety of geranylgeranyl diphosphate (GGPP) to the C2 hydroxyl of (S)-3-O-geranylgeranylglyceryl phosphate (GGGP). This reaction is the second ether-bond-formation step in the biosynthesis of archaeal membrane lipids. In Methanothermobacter thermautotrophicus (strain ATCC 29096 / DSM 1053 / JCM 10044 / NBRC 100330 / Delta H) (Methanobacterium thermoautotrophicum), this protein is Digeranylgeranylglyceryl phosphate synthase.